A 117-amino-acid chain; its full sequence is Non-specific lipid-transfer protein 1 (117 aa).

Positions Met1 to Ala25 are cleaved as a signal peptide. Cystine bridges form between Cys29–Cys76, Cys39–Cys53, Cys54–Cys99, and Cys74–Cys113.

The protein belongs to the plant LTP family.

Functionally, plant non-specific lipid-transfer proteins transfer phospholipids as well as galactolipids across membranes. May play a role in wax or cutin deposition in the cell walls of expanding epidermal cells and certain secretory tissues. This chain is Non-specific lipid-transfer protein 1 (LTP1), found in Brassica napus (Rape).